The primary structure comprises 33 residues: Beta/kappa-theraphotoxin-Hlv1a (33 aa).

3 disulfide bridges follow: Cys2–Cys17, Cys9–Cys22, and Cys16–Cys29. Ile33 carries the isoleucine amide modification.

Belongs to the neurotoxin 10 (Hwtx-1) family. 11 (haplotoxin-2) subfamily. As to expression, expressed by the venom gland.

It localises to the secreted. Spider venom neurotoxin that blocks voltage-gated sodium channel Nav1.3/SCN3A in human (IC(50)=80 nM) and rat (IC(50)=160 nM). Partially inhibits human Kv11.1/KCNH2/ERG (25% at 175 uM). The protein is Beta/kappa-theraphotoxin-Hlv1a of Cyriopagopus lividus (Cobalt blue tarantula).